We begin with the raw amino-acid sequence, 455 residues long: Growth/differentiation factor 6 (455 aa).

An N-terminal signal peptide occupies residues methionine 1–glycine 22. A propeptide spanning residues phenylalanine 23–arginine 335 is cleaved from the precursor. Residues serine 29 to valine 93 are disordered. Positions serine 45 to arginine 76 are enriched in basic and acidic residues. Positions alanine 77–arginine 91 are enriched in low complexity. A glycan (N-linked (GlcNAc...) asparagine) is linked at asparagine 114. 2 disordered regions span residues glutamate 244 to arginine 267 and alanine 300 to arginine 351. Residues glycine 330 to arginine 351 show a composition bias toward basic residues. Disulfide bonds link cysteine 354-cysteine 420, cysteine 383-cysteine 452, and cysteine 387-cysteine 454.

It belongs to the TGF-beta family. Homodimer; disulfide-linked.

It localises to the secreted. Its function is as follows. Growth factor that controls proliferation and cellular differentiation in the retina and bone formation. Plays a key role in regulating apoptosis during retinal development. Establishes dorsal-ventral positional information in the retina and controls the formation of the retinotectal map. Required for normal formation of bones and joints in the limbs, skull, digits and axial skeleton. Plays a key role in establishing boundaries between skeletal elements during development. Regulation of GDF6 expression seems to be a mechanism for evolving species-specific changes in skeletal structures. Seems to positively regulate differentiation of chondrogenic tissue through the growth factor receptors subunits BMPR1A, BMPR1B, BMPR2 and ACVR2A, leading to the activation of SMAD1-SMAD5-SMAD8 complex. The regulation of chondrogenic differentiation is inhibited by NOG. Also involved in the induction of adipogenesis from mesenchymal stem cells. This mechanism acts through the growth factor receptors subunits BMPR1A, BMPR2 and ACVR2A and the activation of SMAD1-SMAD5-SMAD8 complex and MAPK14/p38. The protein is Growth/differentiation factor 6 (GDF6) of Homo sapiens (Human).